The primary structure comprises 285 residues: GTP-binding protein 8 (285 aa).

Residues 110-283 (RQPEVCFIGR…KCFIADITGS (174 aa)) form the EngB-type G domain. GTP is bound by residues 118-125 (GRSNVGKS), 147-151 (GHTKK), 165-168 (DMPG), 227-230 (TKID), and 262-264 (ISA). 2 residues coordinate Mg(2+): serine 125 and threonine 149.

This sequence belongs to the TRAFAC class TrmE-Era-EngA-EngB-Septin-like GTPase superfamily. EngB GTPase family. Requires Mg(2+) as cofactor.

The sequence is that of GTP-binding protein 8 (Gtpbp8) from Rattus norvegicus (Rat).